Reading from the N-terminus, the 53-residue chain is Conotoxin Cal22e (53 aa).

The propeptide occupies 1-5 (GRPSA).

In terms of processing, contains 4 disulfide bonds. Expressed by the venom duct.

The protein localises to the secreted. Probable neurotoxin with unknown target. Possibly targets ion channels. In Californiconus californicus (California cone), this protein is Conotoxin Cal22e.